We begin with the raw amino-acid sequence, 475 residues long: Lipoprotein lipase (475 aa).

The first 27 residues, 1–27, serve as a signal peptide directing secretion; the sequence is MESKALLLLALAVWLQSLTASRGGVAA. Positions 32–53 are interaction with GPIHBP1; sequence RDFIDIESKFALRTPEDTAEDT. C54 and C67 are oxidised to a cystine. N70 is a glycosylation site (N-linked (GlcNAc...) asparagine). Y121 bears the 3'-nitrotyrosine mark. S159 (nucleophile) is an active-site residue. D183 functions as the Charge relay system in the catalytic mechanism. Y191 is modified (3'-nitrotyrosine). A194, R197, S199, and D202 together coordinate Ca(2+). A disulfide bridge connects residues C243 and C266. The essential for determining substrate specificity stretch occupies residues 243-266; that stretch reads CNIGEAIRVIAERGLGDVDQLVKC. Catalysis depends on H268, which acts as the Charge relay system. Disulfide bonds link C291-C310 and C302-C305. Residues 341–464 enclose the PLAT domain; that stretch reads FHYQVKIHFS…KGKAPAVFVK (124 aa). Y343 carries the post-translational modification 3'-nitrotyrosine. N-linked (GlcNAc...) asparagine glycosylation is present at N386. Residues 417–421 are important for interaction with lipoprotein particles; it reads WSDWW. The tract at residues 430 to 434 is important for heparin binding; sequence KIRVK. Residues 443–467 are interaction with GPIHBP1; that stretch reads IFCSREKVSHLQKGKAPAVFVKCHD. A disulfide bridge connects residues C445 and C465.

This sequence belongs to the AB hydrolase superfamily. Lipase family. In terms of assembly, homodimer. Interacts with GPIHBP1 with 1:1 stoichiometry. Interacts with APOC2; the interaction activates LPL activity in the presence of lipids. Interaction with heparan sulfate proteoglycans is required to protect LPL against loss of activity. Associates with lipoprotein particles in blood plasma. Interacts with LMF1 and SEL1L; interaction with SEL1L is required to prevent aggregation of newly synthesized LPL in the endoplasmic reticulum (ER), and for normal export of LPL from the ER to the extracellular space. Interacts with SORL1; SORL1 acts as a sorting receptor, promoting LPL localization to endosomes and later to lysosomes, leading to degradation of newly synthesized LPL. Tyrosine nitration after lipopolysaccharide (LPS) challenge down-regulates the lipase activity. Highest levels in the spinal cord.

It is found in the cell membrane. Its subcellular location is the secreted. It localises to the extracellular space. The protein resides in the extracellular matrix. The enzyme catalyses a triacylglycerol + H2O = a diacylglycerol + a fatty acid + H(+). The catalysed reaction is a 1,2-diacyl-sn-glycero-3-phosphocholine + H2O = a 2-acyl-sn-glycero-3-phosphocholine + a fatty acid + H(+). It carries out the reaction 1,2,3-tri-(9Z-octadecenoyl)-glycerol + H2O = di-(9Z)-octadecenoylglycerol + (9Z)-octadecenoate + H(+). It catalyses the reaction 1,2-di-(9Z-octadecenoyl)-sn-glycero-3-phosphocholine + H2O = (9Z-octadecenoyl)-sn-glycero-3-phosphocholine + (9Z)-octadecenoate + H(+). The enzyme catalyses 1,2,3-tributanoylglycerol + H2O = dibutanoylglycerol + butanoate + H(+). The catalysed reaction is 1,2-dihexadecanoyl-sn-glycero-3-phosphocholine + H2O = hexadecanoyl-sn-glycero-3-phosphocholine + hexadecanoate + H(+). Its activity is regulated as follows. The apolipoprotein APOC2 acts as a coactivator of LPL activity. Ca(2+) binding promotes protein stability and formation of the active homodimer. Interaction with GPIHBP1 protects LPL against inactivation by ANGPTL4. Its function is as follows. Key enzyme in triglyceride metabolism. Catalyzes the hydrolysis of triglycerides from circulating chylomicrons and very low density lipoproteins (VLDL), and thereby plays an important role in lipid clearance from the blood stream, lipid utilization and storage. Although it has both phospholipase and triglyceride lipase activities it is primarily a triglyceride lipase with low but detectable phospholipase activity. Mediates margination of triglyceride-rich lipoprotein particles in capillaries. Recruited to its site of action on the luminal surface of vascular endothelium by binding to GPIHBP1 and cell surface heparan sulfate proteoglycans. This chain is Lipoprotein lipase (LPL), found in Papio anubis (Olive baboon).